A 291-amino-acid polypeptide reads, in one-letter code: MTSTNLEGTFPLIARGKVRDIYQVDDNTLLFVATDRISAYDVIMANGIPNKGKILTKLSEFWFAFLPIDNHLIKGDIFEKYPQLEKYRDQLEGRSLLVRKLKLIPLEVIVRGYITGSGWKEYTKSKTVHGIPIGDVVESQQITPIFTPSTKAEQGEHDENITKEQADKIVGKELCDRIEKIAIDLYTKARDYAATKGIIIADTKFEFGLDGDKIVLVDEVLTPDSSRFWSAAKYKLGQSQESYDKQFLRDWLTANGVAGKDGVAMPEDIAVQTKQKYVEAYENLTGEKWQD.

This sequence belongs to the SAICAR synthetase family.

It catalyses the reaction 5-amino-1-(5-phospho-D-ribosyl)imidazole-4-carboxylate + L-aspartate + ATP = (2S)-2-[5-amino-1-(5-phospho-beta-D-ribosyl)imidazole-4-carboxamido]succinate + ADP + phosphate + 2 H(+). It participates in purine metabolism; IMP biosynthesis via de novo pathway; 5-amino-1-(5-phospho-D-ribosyl)imidazole-4-carboxamide from 5-amino-1-(5-phospho-D-ribosyl)imidazole-4-carboxylate: step 1/2. The protein is Phosphoribosylaminoimidazole-succinocarboxamide synthase (ADE1) of Candida albicans (Yeast).